Reading from the N-terminus, the 122-residue chain is Fluoride-specific ion channel FluC (122 aa).

4 helical membrane-spanning segments follow: residues 6–26, 33–53, 60–80, and 101–121; these read LVVG…INLV, SISL…GLLF, GLSP…FTTF, and LNII…FIIF. The Na(+) site is built by G75 and T78.

It belongs to the fluoride channel Fluc/FEX (TC 1.A.43) family.

The protein localises to the cell inner membrane. The enzyme catalyses fluoride(in) = fluoride(out). Its activity is regulated as follows. Na(+) is not transported, but it plays an essential structural role and its presence is essential for fluoride channel function. Fluoride-specific ion channel. Important for reducing fluoride concentration in the cell, thus reducing its toxicity. The sequence is that of Fluoride-specific ion channel FluC from Campylobacter jejuni subsp. jejuni serotype O:6 (strain 81116 / NCTC 11828).